The following is a 248-amino-acid chain: Ubiquinone biosynthesis O-methyltransferase (248 aa).

4 residues coordinate S-adenosyl-L-methionine: Arg41, Gly72, Asp93, and Met136.

The protein belongs to the methyltransferase superfamily. UbiG/COQ3 family.

It catalyses the reaction a 3-demethylubiquinol + S-adenosyl-L-methionine = a ubiquinol + S-adenosyl-L-homocysteine + H(+). It carries out the reaction a 3-(all-trans-polyprenyl)benzene-1,2-diol + S-adenosyl-L-methionine = a 2-methoxy-6-(all-trans-polyprenyl)phenol + S-adenosyl-L-homocysteine + H(+). It participates in cofactor biosynthesis; ubiquinone biosynthesis. In terms of biological role, O-methyltransferase that catalyzes the 2 O-methylation steps in the ubiquinone biosynthetic pathway. This is Ubiquinone biosynthesis O-methyltransferase from Rhizobium rhizogenes (strain K84 / ATCC BAA-868) (Agrobacterium radiobacter).